A 269-amino-acid polypeptide reads, in one-letter code: Phosphate import ATP-binding protein PstB 1 (269 aa).

The ABC transporter domain occupies 16 to 255; it reads FTTQNLDIYY…DRTGKVFGDP (240 aa). 48–55 is an ATP binding site; the sequence is GPSGCGKS.

It belongs to the ABC transporter superfamily. Phosphate importer (TC 3.A.1.7) family. In terms of assembly, the complex is composed of two ATP-binding proteins (PstB), two transmembrane proteins (PstC and PstA) and a solute-binding protein (PstS).

The protein localises to the cell inner membrane. It carries out the reaction phosphate(out) + ATP + H2O = ADP + 2 phosphate(in) + H(+). Its function is as follows. Part of the ABC transporter complex PstSACB involved in phosphate import. Responsible for energy coupling to the transport system. The chain is Phosphate import ATP-binding protein PstB 1 from Synechocystis sp. (strain ATCC 27184 / PCC 6803 / Kazusa).